We begin with the raw amino-acid sequence, 155 residues long: Probable adenylyl-sulfate kinase (155 aa).

9–16 (GPSGAGKT) is an ATP binding site. S83 acts as the Phosphoserine intermediate in catalysis. The disordered stretch occupies residues 134–155 (LDGEYEEPENPEVVVDTDKNDR).

The protein belongs to the APS kinase family.

The enzyme catalyses adenosine 5'-phosphosulfate + ATP = 3'-phosphoadenylyl sulfate + ADP + H(+). It participates in sulfur metabolism; hydrogen sulfide biosynthesis; sulfite from sulfate: step 2/3. In terms of biological role, catalyzes the synthesis of activated sulfate. The polypeptide is Probable adenylyl-sulfate kinase (cysC) (Archaeoglobus fulgidus (strain ATCC 49558 / DSM 4304 / JCM 9628 / NBRC 100126 / VC-16)).